A 110-amino-acid chain; its full sequence is MEVLAKHRFARTSPQKCRLVADQIRGLPVAKALEILTFSPKKAAVLVKKVLDSAIANAEHNEGADIDELKVGKVFVDEGPTMKRIMPRAKGRADRIIKRTSHITVVVSDR.

It belongs to the universal ribosomal protein uL22 family. As to quaternary structure, part of the 50S ribosomal subunit.

Functionally, this protein binds specifically to 23S rRNA; its binding is stimulated by other ribosomal proteins, e.g. L4, L17, and L20. It is important during the early stages of 50S assembly. It makes multiple contacts with different domains of the 23S rRNA in the assembled 50S subunit and ribosome. The globular domain of the protein is located near the polypeptide exit tunnel on the outside of the subunit, while an extended beta-hairpin is found that lines the wall of the exit tunnel in the center of the 70S ribosome. The chain is Large ribosomal subunit protein uL22 from Shewanella loihica (strain ATCC BAA-1088 / PV-4).